A 171-amino-acid chain; its full sequence is Acetyltransferase PA2271 (171 aa).

The region spanning 3 to 162 (YRIRTSRDED…HEQEIGFAAD (160 aa)) is the N-acetyltransferase domain. CoA contacts are provided by residues 84-86 (LSI) and 128-130 (PFY).

In terms of biological role, catalyzes the transfer of an acetyl group from acetyl coenzyme A (AcCoA) to an acceptor substrate and releases both CoA and the acetylated product. It can use a variety of substrates including spermidine, spermine and N(8)-acetylspermidine, 7-aminocephalosporanic acid, colistin and thiamine. This is Acetyltransferase PA2271 from Pseudomonas aeruginosa (strain ATCC 15692 / DSM 22644 / CIP 104116 / JCM 14847 / LMG 12228 / 1C / PRS 101 / PAO1).